Reading from the N-terminus, the 657-residue chain is Probable cytochrome P450 556A1 (657 aa).

A helical membrane pass occupies residues 2 to 24; that stretch reads FLTSILYTIIIILIFYKGLEYLI. The interval 440–486 is disordered; it reads RSLPSINNNNNNNNNNNNNNNNNNNNNNNNNSNNNSINGNNKNNNRN. A compositionally biased stretch (low complexity) spans 446-486; that stretch reads NNNNNNNNNNNNNNNNNNNNNNNNNSNNNSINGNNKNNNRN. Cys-587 provides a ligand contact to heme.

The protein belongs to the cytochrome P450 family. The cofactor is heme.

The protein resides in the membrane. This is Probable cytochrome P450 556A1 (cyp556A1) from Dictyostelium discoideum (Social amoeba).